Consider the following 136-residue polypeptide: Small ribosomal subunit protein uS9 (136 aa).

A disordered region spans residues 115–136; that stretch reads KVKERKKPGLRKARKARQFSKR. Residues 117–136 are compositionally biased toward basic residues; the sequence is KERKKPGLRKARKARQFSKR.

Belongs to the universal ribosomal protein uS9 family.

The chain is Small ribosomal subunit protein uS9 from Mycoplasmopsis pulmonis (strain UAB CTIP) (Mycoplasma pulmonis).